Consider the following 571-residue polypeptide: Proline--tRNA ligase (571 aa).

It belongs to the class-II aminoacyl-tRNA synthetase family. ProS type 1 subfamily. As to quaternary structure, homodimer.

It is found in the cytoplasm. It catalyses the reaction tRNA(Pro) + L-proline + ATP = L-prolyl-tRNA(Pro) + AMP + diphosphate. In terms of biological role, catalyzes the attachment of proline to tRNA(Pro) in a two-step reaction: proline is first activated by ATP to form Pro-AMP and then transferred to the acceptor end of tRNA(Pro). As ProRS can inadvertently accommodate and process non-cognate amino acids such as alanine and cysteine, to avoid such errors it has two additional distinct editing activities against alanine. One activity is designated as 'pretransfer' editing and involves the tRNA(Pro)-independent hydrolysis of activated Ala-AMP. The other activity is designated 'posttransfer' editing and involves deacylation of mischarged Ala-tRNA(Pro). The misacylated Cys-tRNA(Pro) is not edited by ProRS. This Shewanella sp. (strain W3-18-1) protein is Proline--tRNA ligase.